The primary structure comprises 124 residues: Fluoride-specific ion channel FluC (124 aa).

The next 4 membrane-spanning stretches (helical) occupy residues 3 to 23 (VLLIFLGCGAGGVARYGVSNL), 34 to 54 (IGTLIVNITGSLLMGILFIFI), 68 to 88 (LLLIGFLGGYTTFSSFSIETF), and 100 to 120 (ALNVLLSVALCIAGAWLGVLI). The Na(+) site is built by G75 and T78.

The protein belongs to the fluoride channel Fluc/FEX (TC 1.A.43) family.

Its subcellular location is the cell inner membrane. The catalysed reaction is fluoride(in) = fluoride(out). Its activity is regulated as follows. Na(+) is not transported, but it plays an essential structural role and its presence is essential for fluoride channel function. Fluoride-specific ion channel. Important for reducing fluoride concentration in the cell, thus reducing its toxicity. This Coxiella burnetii (strain Dugway 5J108-111) protein is Fluoride-specific ion channel FluC.